We begin with the raw amino-acid sequence, 395 residues long: Oxalate oxidoreductase subunit alpha (395 aa).

As to quaternary structure, dimer of heterotrimer of one alpha, one beta and one delta subunit.

The catalysed reaction is oxidized 2[4Fe-4S]-[ferredoxin] + oxalate = reduced 2[4Fe-4S]-[ferredoxin] + 2 CO2. Catalyzes the anaerobic oxidation of oxalate using a broad range of electron acceptors, including ferredoxin and the nickel-dependent carbon monoxide dehydrogenase. Does not require coenzyme A as cosubstrate. Enables anaerobic growth on oxalate which is used as energy source by the bacteria. The protein is Oxalate oxidoreductase subunit alpha of Moorella thermoacetica (strain ATCC 39073 / JCM 9320).